The chain runs to 343 residues: Versiconal hemiacetal acetate reductase (343 aa).

Y59 serves as the catalytic Proton donor. H144 provides a ligand contact to substrate. 229-239 lines the NADP(+) pocket; sequence SPVARGALARP.

Belongs to the aldo/keto reductase family. Aldo/keto reductase 2 subfamily.

The enzyme catalyses (2S)-versicolorone + NADP(+) = 1'-hydroxyversicolorone + NADPH + H(+). It carries out the reaction (3S)-versiconol acetate + NADP(+) = (2S,3S)-versiconal hemiacetal acetate + NADPH + H(+). It catalyses the reaction (S)-versiconol + NADP(+) = (2S-3S)-versiconal hemiacetal + NADPH + H(+). Its function is as follows. Catalyzes 3 reactions: from hydroxyversicolorone (HVN) to versicolorone (VONE), from versiconal hemiacetal acetate (VHA) to versiconol acetate (VOAc) and from versiconal (VHOH) to versiconol (VOH). Probably not an aflatoxin biosynthesis gene: may be involved in the vertical branching steps connecting the main pathway from HVN to VHOH with the side pathway from VONE to VOH. This is Versiconal hemiacetal acetate reductase (vrdA) from Aspergillus parasiticus.